The chain runs to 208 residues: ATP synthase subunit b (208 aa).

Positions 1 to 18 (MFVSTAFAQTATESQPAS) are enriched in polar residues. A disordered region spans residues 1 to 26 (MFVSTAFAQTATESQPASTAGEHGAA). A helical transmembrane segment spans residues 56-78 (SQVLWLAITFGLFYLFLSRVVLP).

It belongs to the ATPase B chain family. As to quaternary structure, F-type ATPases have 2 components, F(1) - the catalytic core - and F(0) - the membrane proton channel. F(1) has five subunits: alpha(3), beta(3), gamma(1), delta(1), epsilon(1). F(0) has three main subunits: a(1), b(2) and c(10-14). The alpha and beta chains form an alternating ring which encloses part of the gamma chain. F(1) is attached to F(0) by a central stalk formed by the gamma and epsilon chains, while a peripheral stalk is formed by the delta and b chains.

It localises to the cell inner membrane. Functionally, f(1)F(0) ATP synthase produces ATP from ADP in the presence of a proton or sodium gradient. F-type ATPases consist of two structural domains, F(1) containing the extramembraneous catalytic core and F(0) containing the membrane proton channel, linked together by a central stalk and a peripheral stalk. During catalysis, ATP synthesis in the catalytic domain of F(1) is coupled via a rotary mechanism of the central stalk subunits to proton translocation. Component of the F(0) channel, it forms part of the peripheral stalk, linking F(1) to F(0). The polypeptide is ATP synthase subunit b (Brucella melitensis biotype 1 (strain ATCC 23456 / CCUG 17765 / NCTC 10094 / 16M)).